The chain runs to 106 residues: Thiosulfate sulfurtransferase GlpE (106 aa).

Residues 17-105 (QLPSVCLADI…WRHVYPYTAT (89 aa)) form the Rhodanese domain. Cysteine 65 (cysteine persulfide intermediate) is an active-site residue.

It belongs to the GlpE family.

It localises to the cytoplasm. It carries out the reaction thiosulfate + hydrogen cyanide = thiocyanate + sulfite + 2 H(+). The enzyme catalyses thiosulfate + [thioredoxin]-dithiol = [thioredoxin]-disulfide + hydrogen sulfide + sulfite + 2 H(+). Its function is as follows. Transferase that catalyzes the transfer of sulfur from thiosulfate to thiophilic acceptors such as cyanide or dithiols. May function in a CysM-independent thiosulfate assimilation pathway by catalyzing the conversion of thiosulfate to sulfite, which can then be used for L-cysteine biosynthesis. The protein is Thiosulfate sulfurtransferase GlpE of Tolumonas auensis (strain DSM 9187 / NBRC 110442 / TA 4).